A 187-amino-acid polypeptide reads, in one-letter code: ATP synthase subunit b, chloroplastic (187 aa).

Residues 34-56 (IINLSVVLGLVFTLGRNFLISLL) form a helical membrane-spanning segment.

The protein belongs to the ATPase B chain family. As to quaternary structure, F-type ATPases have 2 components, F(1) - the catalytic core - and F(0) - the membrane proton channel. F(1) has five subunits: alpha(3), beta(3), gamma(1), delta(1), epsilon(1). F(0) has four main subunits: a(1), b(1), b'(1) and c(10-14). The alpha and beta chains form an alternating ring which encloses part of the gamma chain. F(1) is attached to F(0) by a central stalk formed by the gamma and epsilon chains, while a peripheral stalk is formed by the delta, b and b' chains.

The protein localises to the plastid. Its subcellular location is the chloroplast thylakoid membrane. Its function is as follows. F(1)F(0) ATP synthase produces ATP from ADP in the presence of a proton or sodium gradient. F-type ATPases consist of two structural domains, F(1) containing the extramembraneous catalytic core and F(0) containing the membrane proton channel, linked together by a central stalk and a peripheral stalk. During catalysis, ATP synthesis in the catalytic domain of F(1) is coupled via a rotary mechanism of the central stalk subunits to proton translocation. Component of the F(0) channel, it forms part of the peripheral stalk, linking F(1) to F(0). This Pleurastrum terricola (Filamentous green alga) protein is ATP synthase subunit b, chloroplastic.